The primary structure comprises 144 residues: Large ribosomal subunit protein uL16 (144 aa).

Over residues 1 to 16 (MLQPKKTKFRRQQKGR) the composition is skewed to basic residues. The tract at residues 1-22 (MLQPKKTKFRRQQKGRMKGEAQ) is disordered.

Belongs to the universal ribosomal protein uL16 family. In terms of assembly, part of the 50S ribosomal subunit.

Binds 23S rRNA and is also seen to make contacts with the A and possibly P site tRNAs. This chain is Large ribosomal subunit protein uL16, found in Parabacteroides distasonis (strain ATCC 8503 / DSM 20701 / CIP 104284 / JCM 5825 / NCTC 11152).